Here is a 295-residue protein sequence, read N- to C-terminus: Polyisoprenoid diphosphate/phosphate phosphohydrolase PLPP6 (295 aa).

Disordered stretches follow at residues 1–39 and 61–90; these read MPSPRRSMEGRPLGVSASSSSSSPGSPAHGGGGGGSRFE and SESPVHRRGSFPLAAAGPSQSPAPPLPEED. Residues 1-132 lie on the Cytoplasmic side of the membrane; that stretch reads MPSPRRSMEG…ESSSWGSVRP (132 aa). The span at 16–27 shows a compositional bias: low complexity; the sequence is SASSSSSSPGSP. Residues Ser26, Ser36, and Ser70 each carry the phosphoserine modification. The helical transmembrane segment at 133–153 threads the bilayer; that stretch reads LMKLLEISGHGIPWLLGTLYC. The Lumenal portion of the chain corresponds to 154-164; it reads LCRSDSWAGRE. A helical transmembrane segment spans residues 165–185; that stretch reads VLMNLLFALLLDLLLVALIKG. The phosphatase sequence motif I stretch occupies residues 184-192; it reads KGLVRRRRP. Topologically, residues 186–228 are cytoplasmic; it reads LVRRRRPAHNQMDMFVTLSVDKYSFPSGHATRAALMSRFILNH. A phosphatase sequence motif II region spans residues 211-214; sequence PSGH. His214 functions as the Proton donors in the catalytic mechanism. Residues 229 to 249 form a helical membrane-spanning segment; it reads LVLAIPLRVLVVLWAFVLGLS. The phosphatase sequence motif III stretch occupies residues 249–260; the sequence is SRVMLGRHNVTD. At 250 to 260 the chain is on the lumenal side; sequence RVMLGRHNVTD. His256 serves as the catalytic Nucleophile. The helical transmembrane segment at 261–281 threads the bilayer; sequence VAFGFFLGYMQYSIVDYCWLS. Topologically, residues 282–295 are cytoplasmic; that stretch reads PHNAPVLFLLWSQR.

This sequence belongs to the PA-phosphatase related phosphoesterase family. Post-translationally, phosphorylation by PKC activates the phosphatase activity towards presqualene diphosphate. Widely expressed. Expressed in most organs, in particular gastrointestinal organs, spleen, placenta, kidney, thymus and brain.

Its subcellular location is the endoplasmic reticulum membrane. The protein localises to the nucleus envelope. It localises to the nucleus inner membrane. It carries out the reaction presqualene diphosphate + H2O = presqualene phosphate + phosphate + H(+). The enzyme catalyses presqualene phosphate + H2O = presqualene alcohol + phosphate. The catalysed reaction is (2E,6E)-farnesyl diphosphate + H2O = (2E,6E)-farnesyl phosphate + phosphate + H(+). It catalyses the reaction (2E,6E)-farnesyl phosphate + H2O = (2E,6E)-farnesol + phosphate. It carries out the reaction (2E,6E,10E)-geranylgeranyl diphosphate + H2O = (2E,6E,10E)-geranylgeranyl phosphate + phosphate + H(+). The enzyme catalyses (2E,6E,10E)-geranylgeranyl phosphate + H2O = (2E,6E,10E)-geranylgeraniol + phosphate. The catalysed reaction is (2E)-geranyl diphosphate + H2O = (2E)-geranyl phosphate + phosphate + H(+). It catalyses the reaction (2E)-geranyl phosphate + H2O = (2E)-geraniol + phosphate. It carries out the reaction 1,2-dihexadecanoyl-sn-glycero-3-phosphate + H2O = 1,2-dihexadecanoyl-sn-glycerol + phosphate. Its activity is regulated as follows. Inhibited by propranolol. Not inhibited by N-ethylmaleimide or bromoenolactome. Its function is as follows. Magnesium-independent polyisoprenoid diphosphatase that catalyzes the sequential dephosphorylation of presqualene, farnesyl, geranyl and geranylgeranyl diphosphates. Functions in the innate immune response through the dephosphorylation of presqualene diphosphate which acts as a potent inhibitor of the signaling pathways contributing to polymorphonuclear neutrophils activation. May regulate the biosynthesis of cholesterol and related sterols by dephosphorylating presqualene and farnesyl diphosphate, two key intermediates in this biosynthetic pathway. May also play a role in protein prenylation by acting on farnesyl diphosphate and its derivative geranylgeranyl diphosphate, two precursors for the addition of isoprenoid anchors to membrane proteins. Has a lower activity towards phosphatidic acid (PA), but through phosphatidic acid dephosphorylation may participate in the biosynthesis of phospholipids and triacylglycerols. May also act on ceramide-1-P, lysophosphatidic acid (LPA) and sphing-4-enine 1-phosphate/sphingosine-1-phosphate. This Homo sapiens (Human) protein is Polyisoprenoid diphosphate/phosphate phosphohydrolase PLPP6.